The chain runs to 158 residues: Small ribosomal subunit protein uS7 (158 aa).

It belongs to the universal ribosomal protein uS7 family. As to quaternary structure, part of the 30S ribosomal subunit. Contacts proteins S9 and S11.

One of the primary rRNA binding proteins, it binds directly to 16S rRNA where it nucleates assembly of the head domain of the 30S subunit. Is located at the subunit interface close to the decoding center, probably blocks exit of the E-site tRNA. The sequence is that of Small ribosomal subunit protein uS7 from Flavobacterium johnsoniae (strain ATCC 17061 / DSM 2064 / JCM 8514 / BCRC 14874 / CCUG 350202 / NBRC 14942 / NCIMB 11054 / UW101) (Cytophaga johnsonae).